The chain runs to 192 residues: Peptidyl-prolyl cis-trans isomerase 1 (192 aa).

The region spanning 25–188 (FFDVSIGEEP…KTVTIADCGE (164 aa)) is the PPIase cyclophilin-type domain.

Belongs to the cyclophilin-type PPIase family.

The enzyme catalyses [protein]-peptidylproline (omega=180) = [protein]-peptidylproline (omega=0). In terms of biological role, PPIases accelerate the folding of proteins. It catalyzes the cis-trans isomerization of proline imidic peptide bonds in oligopeptides. The polypeptide is Peptidyl-prolyl cis-trans isomerase 1 (cyn-1) (Caenorhabditis elegans).